The primary structure comprises 859 residues: Bifunctional heparan sulfate N-deacetylase/N-sulfotransferase 1 (859 aa).

At 1–13 the chain is on the cytoplasmic side; the sequence is MIITPYLNPRLVK. Residues 14 to 34 form a helical; Signal-anchor for type II membrane protein membrane-spanning segment; sequence PLKWLAIIILLYFLYFSLFSI. Residues 34 to 575 are heparan sulfate N-deacetylase 1; that stretch reads INKKPGKPRK…PRHQAILPPS (542 aa). Topologically, residues 35-859 are lumenal; the sequence is NKKPGKPRKP…WLEEAVRIRV (825 aa). Residues Asn50, Asn74, Asn210, Asn262, Asn378, and Asn429 are each glycosylated (N-linked (GlcNAc...) asparagine). The tract at residues 576-859 is heparan sulfate N-sulfotransferase 1; that stretch reads MSCSKKSLPD…WLEEAVRIRV (284 aa). Lys593 serves as the catalytic For sulfotransferase activity. Position 593-597 (593-597) interacts with 3'-phosphoadenylyl sulfate; it reads KTGST. 2 N-linked (GlcNAc...) asparagine glycosylation sites follow: Asn608 and Asn643. Ser687 is a 3'-phosphoadenylyl sulfate binding site. An N-linked (GlcNAc...) asparagine glycan is attached at Asn715. Cys796 and Cys805 are disulfide-bonded. 810–814 serves as a coordination point for 3'-phosphoadenylyl sulfate; the sequence is KGRKY.

It belongs to the sulfotransferase 1 family. NDST subfamily. In terms of assembly, monomer.

It localises to the golgi apparatus membrane. It catalyses the reaction alpha-D-glucosaminyl-[heparan sulfate](n) + 3'-phosphoadenylyl sulfate = N-sulfo-alpha-D-glucosaminyl-[heparan sulfate](n) + adenosine 3',5'-bisphosphate + 2 H(+). It functions in the pathway glycan metabolism; heparan sulfate biosynthesis. It participates in glycan metabolism; heparin biosynthesis. Functionally, essential bifunctional enzyme that catalyzes both the N-deacetylation and the N-sulfation of glucosamine (GlcNAc) of the glycosaminoglycan in heparan sulfate. Modifies the GlcNAc-GlcA disaccharide repeating sugar backbone to make N-sulfated heparosan, a prerequisite substrate for later modifications in heparin biosynthesis. The protein is Bifunctional heparan sulfate N-deacetylase/N-sulfotransferase 1 (hst-1) of Caenorhabditis briggsae.